The sequence spans 505 residues: ATP synthase subunit alpha, chloroplastic (505 aa).

Position 170–177 (170–177) interacts with ATP; sequence GDRQTGKT.

The protein belongs to the ATPase alpha/beta chains family. F-type ATPases have 2 components, CF(1) - the catalytic core - and CF(0) - the membrane proton channel. CF(1) has five subunits: alpha(3), beta(3), gamma(1), delta(1), epsilon(1). CF(0) has four main subunits: a, b, b' and c.

It is found in the plastid. The protein resides in the chloroplast thylakoid membrane. It carries out the reaction ATP + H2O + 4 H(+)(in) = ADP + phosphate + 5 H(+)(out). Its function is as follows. Produces ATP from ADP in the presence of a proton gradient across the membrane. The alpha chain is a regulatory subunit. The protein is ATP synthase subunit alpha, chloroplastic of Phaeodactylum tricornutum (strain CCAP 1055/1).